The sequence spans 245 residues: ATP synthase subunit a, chloroplastic (245 aa).

5 helical membrane passes run 34 to 54 (TLMT…LSNL), 93 to 113 (VPFL…GALL), 132 to 152 (INTT…AGIS), 197 to 217 (LVIA…LMLL), and 218 to 238 (GLFT…AYIG).

It belongs to the ATPase A chain family. As to quaternary structure, F-type ATPases have 2 components, CF(1) - the catalytic core - and CF(0) - the membrane proton channel. CF(1) has five subunits: alpha(3), beta(3), gamma(1), delta(1), epsilon(1). CF(0) has four main subunits: a, b, b' and c.

It localises to the plastid. The protein resides in the chloroplast thylakoid membrane. Key component of the proton channel; it plays a direct role in the translocation of protons across the membrane. This is ATP synthase subunit a, chloroplastic from Bigelowiella natans (Pedinomonas minutissima).